Reading from the N-terminus, the 121-residue chain is Flagellar protein FliT (121 aa).

Residues 1–50 (MNHAPHLYFAWQQLVEKSQLMLRLATEEQWDELIASEMAYVNAVQEIAHL) form a required for homodimerization region. Positions 60–98 (MQEQLRPMLRLILDNESKVKQLLQIRMDELAKLVGQSSV) are fliD binding.

This sequence belongs to the FliT family. As to quaternary structure, homodimer. Interacts with FliD and FlhC.

It is found in the cytoplasm. It localises to the cytosol. Dual-function protein that regulates the transcription of class 2 flagellar operons and that also acts as an export chaperone for the filament-capping protein FliD. As a transcriptional regulator, acts as an anti-FlhDC factor; it directly binds FlhC, thus inhibiting the binding of the FlhC/FlhD complex to class 2 promoters, resulting in decreased expression of class 2 flagellar operons. As a chaperone, effects FliD transition to the membrane by preventing its premature polymerization, and by directing it to the export apparatus. The chain is Flagellar protein FliT from Escherichia coli (strain ATCC 8739 / DSM 1576 / NBRC 3972 / NCIMB 8545 / WDCM 00012 / Crooks).